The chain runs to 265 residues: Phosphonates import ATP-binding protein PhnC 1 (265 aa).

One can recognise an ABC transporter domain in the interval 3–247; that stretch reads LRLSAIELRH…HLDTLYANEQ (245 aa). 36-43 serves as a coordination point for ATP; that stretch reads GPSGAGKT.

The protein belongs to the ABC transporter superfamily. Phosphonates importer (TC 3.A.1.9.1) family. In terms of assembly, the complex is composed of two ATP-binding proteins (PhnC), two transmembrane proteins (PhnE) and a solute-binding protein (PhnD).

It is found in the cell inner membrane. It carries out the reaction phosphonate(out) + ATP + H2O = phosphonate(in) + ADP + phosphate + H(+). Part of the ABC transporter complex PhnCDE involved in phosphonates import. Responsible for energy coupling to the transport system. The sequence is that of Phosphonates import ATP-binding protein PhnC 1 from Pseudomonas syringae pv. syringae (strain B728a).